Here is a 394-residue protein sequence, read N- to C-terminus: Salivary plasminogen activator gamma (394 aa).

The N-terminal stretch at 1 to 36 (MVNTMKTKLLCVLLLCGAVFSLPRQETYRQLARGSR) is a signal peptide. One can recognise a Kringle domain in the interval 45–126 (CYKDQGVTYR…TSESCSVPVC (82 aa)). Cystine bridges form between C45–C126, C66–C108, C97–C121, C131–C262, C174–C190, C182–C251, C276–C351, C308–C324, and C341–C369. One can recognise a Peptidase S1 domain in the interval 143–393 (STGGLFTDIT…YLGWIRDNMR (251 aa)). Active-site charge relay system residues include H189 and D238. N-linked (GlcNAc...) asparagine glycosylation occurs at N315. Catalysis depends on S345, which acts as the Charge relay system.

It belongs to the peptidase S1 family. As to quaternary structure, monomer.

It is found in the secreted. It carries out the reaction Specific cleavage of Arg-|-Val bond in plasminogen to form plasmin.. Probably essential to support the feeding habits of this exclusively haematophagous animal. Probable potent thrombolytic agent. The chain is Salivary plasminogen activator gamma from Desmodus rotundus (Vampire bat).